The chain runs to 225 residues: Ribosomal RNA small subunit methyltransferase G (225 aa).

S-adenosyl-L-methionine is bound by residues G71, L76, 121-122 (AE), and R139. The tract at residues 204–225 (VVEARRATPSNGRGRPGRSSRR) is disordered.

It belongs to the methyltransferase superfamily. RNA methyltransferase RsmG family.

It is found in the cytoplasm. In terms of biological role, specifically methylates the N7 position of guanine in position 518 of 16S rRNA. This Mycobacterium sp. (strain KMS) protein is Ribosomal RNA small subunit methyltransferase G.